The sequence spans 489 residues: UDP-N-acetylmuramate--L-alanine ligase (489 aa).

128 to 134 contacts ATP; sequence GTHGKTT.

Belongs to the MurCDEF family.

It localises to the cytoplasm. It catalyses the reaction UDP-N-acetyl-alpha-D-muramate + L-alanine + ATP = UDP-N-acetyl-alpha-D-muramoyl-L-alanine + ADP + phosphate + H(+). It functions in the pathway cell wall biogenesis; peptidoglycan biosynthesis. Functionally, cell wall formation. This Shewanella halifaxensis (strain HAW-EB4) protein is UDP-N-acetylmuramate--L-alanine ligase.